Reading from the N-terminus, the 226-residue chain is Ribonuclease 3 (226 aa).

The region spanning 6–128 is the RNase III domain; it reads INRLQRKLGY…LIGGVFLDSN (123 aa). Glutamate 41 contributes to the Mg(2+) binding site. Aspartate 45 is a catalytic residue. Mg(2+)-binding residues include aspartate 114 and glutamate 117. Glutamate 117 is a catalytic residue. A DRBM domain is found at 155-225; sequence DPKTRLQEYL…AEQVLKKLEL (71 aa).

It belongs to the ribonuclease III family. In terms of assembly, homodimer. It depends on Mg(2+) as a cofactor.

Its subcellular location is the cytoplasm. The enzyme catalyses Endonucleolytic cleavage to 5'-phosphomonoester.. Digests double-stranded RNA. Involved in the processing of primary rRNA transcript to yield the immediate precursors to the large and small rRNAs (23S and 16S). Processes some mRNAs, and tRNAs when they are encoded in the rRNA operon. Processes pre-crRNA and tracrRNA of type II CRISPR loci if present in the organism. The protein is Ribonuclease 3 of Salmonella choleraesuis (strain SC-B67).